We begin with the raw amino-acid sequence, 86 residues long: UPF0297 protein LCABL_08470 (86 aa).

The protein belongs to the UPF0297 family.

This is UPF0297 protein LCABL_08470 from Lacticaseibacillus casei (strain BL23) (Lactobacillus casei).